The primary structure comprises 392 residues: Probable tRNA sulfurtransferase (392 aa).

The 107-residue stretch at 63–169 (GRAADAAADT…DAEAFVFLTH (107 aa)) folds into the THUMP domain. Residues 187–188 (LV), arginine 270, glycine 292, and glutamine 301 contribute to the ATP site.

It belongs to the ThiI family.

The protein resides in the cytoplasm. It carries out the reaction [ThiI sulfur-carrier protein]-S-sulfanyl-L-cysteine + a uridine in tRNA + 2 reduced [2Fe-2S]-[ferredoxin] + ATP + H(+) = [ThiI sulfur-carrier protein]-L-cysteine + a 4-thiouridine in tRNA + 2 oxidized [2Fe-2S]-[ferredoxin] + AMP + diphosphate. The catalysed reaction is [ThiS sulfur-carrier protein]-C-terminal Gly-Gly-AMP + S-sulfanyl-L-cysteinyl-[cysteine desulfurase] + AH2 = [ThiS sulfur-carrier protein]-C-terminal-Gly-aminoethanethioate + L-cysteinyl-[cysteine desulfurase] + A + AMP + 2 H(+). It participates in cofactor biosynthesis; thiamine diphosphate biosynthesis. Functionally, catalyzes the ATP-dependent transfer of a sulfur to tRNA to produce 4-thiouridine in position 8 of tRNAs, which functions as a near-UV photosensor. Also catalyzes the transfer of sulfur to the sulfur carrier protein ThiS, forming ThiS-thiocarboxylate. This is a step in the synthesis of thiazole, in the thiamine biosynthesis pathway. The sulfur is donated as persulfide by IscS. The protein is Probable tRNA sulfurtransferase of Halobacterium salinarum (strain ATCC 29341 / DSM 671 / R1).